A 630-amino-acid polypeptide reads, in one-letter code: uncharacterized protein (630 aa).

Helical transmembrane passes span 8–28 (LFNM…ASAV) and 258–278 (VDNS…PLVI). Positions 399-426 (EETSKPTEQPSPADSTSTPAAPEKGAAS) are disordered. Positions 404–417 (PTEQPSPADSTSTP) are enriched in polar residues.

This sequence belongs to the peptidase S1C family.

The protein localises to the cell membrane. This is an uncharacterized protein from Sinorhizobium fredii (strain NBRC 101917 / NGR234).